A 309-amino-acid chain; its full sequence is Protein lifeguard 3 (309 aa).

Disordered regions lie at residues Met-1–Val-31 and Pro-64–Pro-84. Positions Asp-70–Pro-84 are enriched in basic and acidic residues. Ser-79 and Ser-81 each carry phosphoserine. 7 helical membrane passes run Tyr-101 to Val-121, Val-132 to Cys-152, Ile-163 to Met-183, Ala-188 to Phe-208, Phe-221 to Phe-241, Ile-244 to Ala-264, and Gly-286 to Gly-306.

It belongs to the BI1 family. LFG subfamily. Expressed in most tissues except spleen, thymus and testis.

The protein localises to the membrane. It is found in the lysosome membrane. Its subcellular location is the endosome membrane. Functionally, negatively regulates aortic matrix metalloproteinase-9 (MMP9) production and may play a protective role in vascular remodeling. The chain is Protein lifeguard 3 (Tmbim1) from Mus musculus (Mouse).